The primary structure comprises 240 residues: UDP-2,3-diacylglucosamine hydrolase (240 aa).

Residues D8, H10, D41, N79, and H114 each contribute to the Mn(2+) site. 79–80 (NR) is a binding site for substrate. Positions 122, 160, 164, 167, and 195 each coordinate substrate. Positions 195 and 197 each coordinate Mn(2+).

This sequence belongs to the LpxH family. It depends on Mn(2+) as a cofactor.

It localises to the cell inner membrane. The enzyme catalyses UDP-2-N,3-O-bis[(3R)-3-hydroxytetradecanoyl]-alpha-D-glucosamine + H2O = 2-N,3-O-bis[(3R)-3-hydroxytetradecanoyl]-alpha-D-glucosaminyl 1-phosphate + UMP + 2 H(+). The protein operates within glycolipid biosynthesis; lipid IV(A) biosynthesis; lipid IV(A) from (3R)-3-hydroxytetradecanoyl-[acyl-carrier-protein] and UDP-N-acetyl-alpha-D-glucosamine: step 4/6. Hydrolyzes the pyrophosphate bond of UDP-2,3-diacylglucosamine to yield 2,3-diacylglucosamine 1-phosphate (lipid X) and UMP by catalyzing the attack of water at the alpha-P atom. Involved in the biosynthesis of lipid A, a phosphorylated glycolipid that anchors the lipopolysaccharide to the outer membrane of the cell. This Salmonella newport (strain SL254) protein is UDP-2,3-diacylglucosamine hydrolase.